The sequence spans 413 residues: CinA-like protein (413 aa).

This sequence belongs to the CinA family.

This Geotalea daltonii (strain DSM 22248 / JCM 15807 / FRC-32) (Geobacter daltonii) protein is CinA-like protein.